A 164-amino-acid polypeptide reads, in one-letter code: Zinc finger protein ZAT8 (164 aa).

2 C2H2-type zinc fingers span residues 37-59 (FRCK…RASH) and 85-107 (HPCP…MRRH).

It is found in the nucleus. Functionally, probable transcription factor that may be involved in stress responses. This chain is Zinc finger protein ZAT8 (ZAT8), found in Arabidopsis thaliana (Mouse-ear cress).